The following is a 294-amino-acid chain: Small ribosomal subunit protein uS2 (294 aa).

Residues 261 to 274 (MDEDADSKKSKAEE) are compositionally biased toward basic and acidic residues. A disordered region spans residues 261–294 (MDEDADSKKSKAEEPVIPTAEEPAITTIEVDQNE).

It belongs to the universal ribosomal protein uS2 family.

The chain is Small ribosomal subunit protein uS2 from Leptospira borgpetersenii serovar Hardjo-bovis (strain JB197).